A 172-amino-acid chain; its full sequence is MADETTNGAAAPADQQQQPVMPTLKIMAQFIRDMSFENIAAQKGVQGEGQPDIQVQVNLDAKKRTVEKQFEVAIKLNINAKTKESGDMIFGLELDYAGIFFIDNVPDEQMHPFLLIECPRMIFPFVRRIVSDVTRDGGFPPLNLDQIDFVALYRQEIARRAAAQQAAPSAEV.

This sequence belongs to the SecB family. Homotetramer, a dimer of dimers. One homotetramer interacts with 1 SecA dimer.

Its subcellular location is the cytoplasm. One of the proteins required for the normal export of preproteins out of the cell cytoplasm. It is a molecular chaperone that binds to a subset of precursor proteins, maintaining them in a translocation-competent state. It also specifically binds to its receptor SecA. In Dinoroseobacter shibae (strain DSM 16493 / NCIMB 14021 / DFL 12), this protein is Protein-export protein SecB.